Here is a 174-residue protein sequence, read N- to C-terminus: ATP synthase subunit d, mitochondrial (174 aa).

Position 2 is an N-acetylserine (S2).

The protein belongs to the ATPase d subunit family. F-type ATPases have 2 components, CF(1) - the catalytic core - and CF(0) - the membrane proton channel. In yeast, the dimeric form of ATP synthase consists of 17 polypeptides: alpha, beta, gamma, delta, epsilon, 4 (B), 5 (OSCP), 6 (A), 8, 9 (C), d, E (Tim11), f, g, h, i/j and k.

It localises to the mitochondrion. The protein localises to the mitochondrion inner membrane. Mitochondrial membrane ATP synthase (F(1)F(0) ATP synthase or Complex V) produces ATP from ADP in the presence of a proton gradient across the membrane which is generated by electron transport complexes of the respiratory chain. F-type ATPases consist of two structural domains, F(1) - containing the extramembraneous catalytic core, and F(0) - containing the membrane proton channel, linked together by a central stalk and a peripheral stalk. During catalysis, ATP synthesis in the catalytic domain of F(1) is coupled via a rotary mechanism of the central stalk subunits to proton translocation. Part of the complex F(0) domain and the peripheric stalk, which acts as a stator to hold the catalytic alpha(3)beta(3) subcomplex and subunit a/ATP6 static relative to the rotary elements. The sequence is that of ATP synthase subunit d, mitochondrial (ATP7) from Saccharomyces cerevisiae (strain ATCC 204508 / S288c) (Baker's yeast).